A 188-amino-acid polypeptide reads, in one-letter code: UPF0398 protein BBR47_29830 (188 aa).

Belongs to the UPF0398 family.

In Brevibacillus brevis (strain 47 / JCM 6285 / NBRC 100599), this protein is UPF0398 protein BBR47_29830.